We begin with the raw amino-acid sequence, 252 residues long: MAEELGLGFGEAVPVEMLPEGCRHRREARTGLAARSKACLALTCCLLSFPILAGLSTLLMTGQLRIPGKDCMFPTVTEERSAPSAQPVYTPSRDKPKAHLTIMRQTPVPHLKNELAALHWENNLGMAFTKNRMNYTNKFLVIPESGDYFIYSQITFRGTTSECGDISRVRRPKKPDSITVVITKVADSYPEPAHLLTGTKSVCEISSNWFQPIYLGAMFSLEEGDRLMVNVSDISLVDYTKEDKTFFGAFLI.

Topologically, residues 1-39 (MAEELGLGFGEAVPVEMLPEGCRHRREARTGLAARSKAC) are cytoplasmic. A helical; Signal-anchor for type II membrane protein membrane pass occupies residues 40–60 (LALTCCLLSFPILAGLSTLLM). At 61–252 (TGQLRIPGKD…DKTFFGAFLI (192 aa)) the chain is on the extracellular side. The THD domain occupies 96–252 (PKAHLTIMRQ…DKTFFGAFLI (157 aa)). N134 is a glycosylation site (N-linked (GlcNAc...) asparagine). An intrachain disulfide couples C163 to C203. N-linked (GlcNAc...) asparagine glycosylation is present at N230.

Belongs to the tumor necrosis factor family. Homotrimer.

It localises to the membrane. Functionally, receptor for TNFRSF25 and TNFRSF6B. Mediates activation of NF-kappa-B. Inhibits vascular endothelial growth and angiogenesis (in vitro). Promotes activation of caspases and apoptosis. Promotes splenocyte alloactivation. This is Tumor necrosis factor ligand superfamily member 15 (Tnfsf15) from Rattus norvegicus (Rat).